We begin with the raw amino-acid sequence, 433 residues long: Serine hydroxymethyltransferase (433 aa).

(6S)-5,6,7,8-tetrahydrofolate is bound by residues leucine 132 and glycine 136 to leucine 138. An N6-(pyridoxal phosphate)lysine modification is found at lysine 241.

The protein belongs to the SHMT family. As to quaternary structure, homodimer. The cofactor is pyridoxal 5'-phosphate.

It localises to the cytoplasm. The enzyme catalyses (6R)-5,10-methylene-5,6,7,8-tetrahydrofolate + glycine + H2O = (6S)-5,6,7,8-tetrahydrofolate + L-serine. It participates in one-carbon metabolism; tetrahydrofolate interconversion. The protein operates within amino-acid biosynthesis; glycine biosynthesis; glycine from L-serine: step 1/1. Functionally, catalyzes the reversible interconversion of serine and glycine with tetrahydrofolate (THF) serving as the one-carbon carrier. This reaction serves as the major source of one-carbon groups required for the biosynthesis of purines, thymidylate, methionine, and other important biomolecules. Also exhibits THF-independent aldolase activity toward beta-hydroxyamino acids, producing glycine and aldehydes, via a retro-aldol mechanism. This chain is Serine hydroxymethyltransferase, found in Methylobacterium sp. (strain 4-46).